The following is a 159-amino-acid chain: Troponin C, skeletal muscle (159 aa).

Thr1 bears the N-acetylthreonine mark. 4 EF-hand domains span residues 14-49 (EMIA…LGQT), 50-85 (PTKE…QMKE), 90-125 (KSEE…SGEH), and 126-159 (VTDE…EGVQ). Ca(2+) contacts are provided by Asp27, Asp29, Asp33, Glu38, Asp63, Asp65, Ser67, Thr69, Glu74, Asp103, Asn105, Asp107, Tyr109, Glu114, Asp139, Asn141, Asp143, Arg145, and Glu150.

The protein belongs to the troponin C family.

In terms of biological role, troponin is the central regulatory protein of striated muscle contraction. Tn consists of three components: Tn-I which is the inhibitor of actomyosin ATPase, Tn-T which contains the binding site for tropomyosin and Tn-C. The binding of calcium to Tn-C abolishes the inhibitory action of Tn on actin filaments. The protein is Troponin C, skeletal muscle (TNNC2) of Sus scrofa (Pig).